The primary structure comprises 267 residues: C-type lectin domain family 12 member A (267 aa).

At 1 to 43 (MSEEIVYANLKIQDPDKKEETQKSDKCGGKVSADASHSQQKTV) the chain is on the cytoplasmic side. Residues 5–10 (IVYANL) carry the ITIM motif motif. The residue at position 7 (Tyr-7) is a Phosphotyrosine. The chain crosses the membrane as a helical; Signal-anchor for type II membrane protein span at residues 44-64 (LILILLCLLLFIGMGVLGGIF). The Extracellular portion of the chain corresponds to 65 to 267 (YTTLATEMIK…VLNGLPEDSR (203 aa)). Asn-98 and Asn-105 each carry an N-linked (GlcNAc...) asparagine glycan. 4 cysteine pairs are disulfide-bonded: Cys-118–Cys-130, Cys-133–Cys-144, Cys-161–Cys-246, and Cys-225–Cys-238. In terms of domain architecture, C-type lectin spans 140–247 (YKDSCYSQLN…CTDENNIICE (108 aa)). A glycan (N-linked (GlcNAc...) asparagine) is linked at Asn-165.

Homodimer; disulfide-linked. Interacts (when the ITIM motif is phosphorylated) with PTPN6 and PTPN11. Post-translationally, phosphorylated at Tyr-7 by SRC in the ITIM motif following ligand-binding, promoting recruitment of tyrosine-protein phosphatases PTPN6 and PTPN11. As to expression, mainly expressed in lymphoid tissues. Preferentially expressed in peripheral blood leukocytes; less frequent in thymus, spleen, heart, brain and lung; and undetectable in other tissues.

It is found in the cell membrane. Its function is as follows. Myeloid inhibitory C-type lectin receptor that acts as a negative regulator of myeloid cell activation. Myeloid cell inhibition is required to limit proinflammatory pathways and protect against excessive inflammation. Specifically recognizes and binds various structures, such as neutrophil extracellular traps (NETs) or monosodium urate crystals. Also acts as a pattern-recognition receptor for pathogen-associated molecules, such as plasmodium hemozoin or mycobacterial micolic acid. Ligand-binding induces phosphorylation of its ITIM motif, followed by recruitment of tyrosine-protein phosphatases PTPN6 and PTPN11, which counteract tyrosine-protein kinase SYK, thereby preventing myeloid cell activation. Acts as a pattern-recognition receptor for NETs in neutrophils: specifically recognizes DNA in NETs, leading to inhibit neutrophil activation and limit further NET formation. This regulation is essential for controlling key neutrophil responses and limit NET-mediated inflammatory conditions. Also recognizes dead cells by acting as a receptor for monosodium urate crystals, leading to down-regulate neutrophil activation. Binding to monosodium urate crystals also promotes the type I interferon response. Acts as an inhibitor of natural killer (NK) cell cytotoxicity. Also acts as an ihibitor of dendritic cell maturation in an IL10-dependent manner. The polypeptide is C-type lectin domain family 12 member A (Mus musculus (Mouse)).